The following is a 423-amino-acid chain: Sulfate adenylyltransferase (423 aa).

Gln-207 and Arg-209 together coordinate sulfate. ATP contacts are provided by residues Gln-207–Asn-210 and Gly-301–His-304. Residues Arg-209 and Asn-210 contribute to the active site. Position 305 (Ala-305) interacts with sulfate.

Belongs to the sulfate adenylyltransferase family.

Its subcellular location is the mitosome. It carries out the reaction sulfate + ATP + H(+) = adenosine 5'-phosphosulfate + diphosphate. The protein operates within sulfur metabolism; hydrogen sulfide biosynthesis; sulfite from sulfate: step 1/3. Functionally, catalyzes the first intracellular reaction of sulfate assimilation, forming adenosine-5'-phosphosulfate (APS) from inorganic sulfate and ATP. In Entamoeba histolytica (strain ATCC 30459 / HM-1:IMSS / ABRM), this protein is Sulfate adenylyltransferase.